We begin with the raw amino-acid sequence, 173 residues long: MTEYFEVGKILSPHGLKGEVKVNATTDFPEERLANGSRLFIKNSDQYQELIVDGARRHKQFYLVKFEEIDGIDQAEKVCGKELYVAETDQQELPEGSYYFKDILNCPVYDAETGEKLGVLANIETPGANDIWEIKPEHGKSFWIPNIESVVNKVDLANKRIEVTLLEGLRDEN.

A PRC barrel domain is found at 95-169 (EGSYYFKDIL…RIEVTLLEGL (75 aa)).

This sequence belongs to the RimM family. Binds ribosomal protein uS19.

It localises to the cytoplasm. In terms of biological role, an accessory protein needed during the final step in the assembly of 30S ribosomal subunit, possibly for assembly of the head region. Essential for efficient processing of 16S rRNA. May be needed both before and after RbfA during the maturation of 16S rRNA. It has affinity for free ribosomal 30S subunits but not for 70S ribosomes. The protein is Ribosome maturation factor RimM of Lactobacillus gasseri (strain ATCC 33323 / DSM 20243 / BCRC 14619 / CIP 102991 / JCM 1131 / KCTC 3163 / NCIMB 11718 / NCTC 13722 / AM63).